The chain runs to 427 residues: Neuronal pentraxin-2 (427 aa).

The first 17 residues, 1 to 17 (MLALLAAGVAFAVVVLA), serve as a signal peptide directing secretion. N-linked (GlcNAc...) asparagine glycans are attached at residues asparagine 144 and asparagine 185. The Pentraxin (PTX) domain occupies 219 to 420 (DAFKVSLPFR…GASKWPVETC (202 aa)). Residues cysteine 249 and cysteine 309 are joined by a disulfide bond. Residues asparagine 273, glutamate 351, glutamine 352, aspartate 353, and glutamine 363 each contribute to the Ca(2+) site. Asparagine 389 is a glycosylation site (N-linked (GlcNAc...) asparagine).

Homooligomer or heterooligomer (probably pentamer) with neuronal pentraxin receptor (NPTXR). It depends on Ca(2+) as a cofactor. In terms of tissue distribution, testis specific.

It localises to the cytoplasmic vesicle. The protein resides in the secretory vesicle. The protein localises to the acrosome lumen. Functionally, may be involved in binding, concentrating, and sorting soluble glycoproteins or glycolipids that are destined for the acrosome. This is Neuronal pentraxin-2 (NPTX2) from Cavia porcellus (Guinea pig).